A 385-amino-acid chain; its full sequence is Phosphatidate cytidylyltransferase, mitochondrial (385 aa).

The protein belongs to the TAM41 family. It depends on Mg(2+) as a cofactor. Co(2+) is required as a cofactor. Requires Cu(2+) as cofactor.

It is found in the mitochondrion inner membrane. The catalysed reaction is a 1,2-diacyl-sn-glycero-3-phosphate + CTP + H(+) = a CDP-1,2-diacyl-sn-glycerol + diphosphate. The protein operates within phospholipid metabolism; CDP-diacylglycerol biosynthesis; CDP-diacylglycerol from sn-glycerol 3-phosphate: step 3/3. Functionally, catalyzes the formation of CDP-diacylglycerol (CDP-DAG) from phosphatidic acid (PA) in the mitochondrial inner membrane. Required for the biosynthesis of the dimeric phospholipid cardiolipin, which stabilizes supercomplexes of the mitochondrial respiratory chain in the mitochondrial inner membrane. The chain is Phosphatidate cytidylyltransferase, mitochondrial (TAM41) from Saccharomyces cerevisiae (strain ATCC 204508 / S288c) (Baker's yeast).